Here is a 245-residue protein sequence, read N- to C-terminus: 2,3-bisphosphoglycerate-dependent phosphoglycerate mutase (245 aa).

Substrate is bound by residues 8 to 15 (RHGQSLWN), 21 to 22 (TG), arginine 60, 87 to 90 (ERHY), lysine 98, 114 to 115 (RR), and 183 to 184 (GN). The active-site Tele-phosphohistidine intermediate is the histidine 9. Glutamate 87 acts as the Proton donor/acceptor in catalysis.

Belongs to the phosphoglycerate mutase family. BPG-dependent PGAM subfamily.

The catalysed reaction is (2R)-2-phosphoglycerate = (2R)-3-phosphoglycerate. The protein operates within carbohydrate degradation; glycolysis; pyruvate from D-glyceraldehyde 3-phosphate: step 3/5. In terms of biological role, catalyzes the interconversion of 2-phosphoglycerate and 3-phosphoglycerate. In Bacillus thuringiensis (strain Al Hakam), this protein is 2,3-bisphosphoglycerate-dependent phosphoglycerate mutase.